The chain runs to 343 residues: Homeobox protein DBX1 (343 aa).

2 disordered regions span residues 56–100 (RSVP…TAFS) and 240–343 (KERE…ITVS). Residues 181 to 240 (GMLRRAVFSDVQRKALEKMFQKQKYISKPDRKKLAAKLGLKDSQVKIWFQNRRMKWRNSK) constitute a DNA-binding region (homeobox). A compositionally biased stretch (low complexity) spans 314–323 (AHSSSPGKPS). The segment covering 326–343 (SDSEEEEEGEEQEEITVS) has biased composition (acidic residues).

It belongs to the H2.0 homeobox family.

It localises to the nucleus. Could have a role in patterning the central nervous system during embryogenesis. Has a key role in regulating the distinct phenotypic features that distinguish two major classes of ventral interneurons, V0 and V1 neurons. Regulates the transcription factor profile, neurotransmitter phenotype, intraspinal migratory path and axonal trajectory of V0 neurons, features that differentiate them from an adjacent set of V1 neurons. In Homo sapiens (Human), this protein is Homeobox protein DBX1 (DBX1).